Reading from the N-terminus, the 433-residue chain is Vesicle-associated protein (433 aa).

A run of 2 repeats spans residues Gly-112–Gly-122 and Gly-219–Gly-229. Residues Gly-112–Gly-350 are 3 X 11 AA repeats of G-G-G-I-G-G-G-L-G-G-G. The Nuclear localization signal motif lies at Val-266 to Gly-274. Copy 3 of the repeat occupies Gly-340–Gly-350. Disordered stretches follow at residues Arg-366–Gly-389 and His-411–Gly-433. Basic and acidic residues predominate over residues Asp-423–Gly-433.

In terms of tissue distribution, egg cortex.

It is found in the microsome membrane. It localises to the nucleus. Its subcellular location is the endoplasmic reticulum membrane. Functionally, may function as a multidomain RNA-binding protein. May play a role in nuclear RNA processing and in early development. This is Vesicle-associated protein (VAP-1) from Strongylocentrotus purpuratus (Purple sea urchin).